The chain runs to 894 residues: Alpha-actinin-2 (894 aa).

The interval 1–254 (MNQIEPGVQY…IMTYVSCFYH (254 aa)) is actin-binding. Calponin-homology (CH) domains follow at residues 38 to 142 (KQQR…LRFA) and 151 to 257 (TSAK…HAFA). Thr-237 carries the post-translational modification Phosphothreonine. 4 Spectrin repeats span residues 281-391 (RLME…WLLN), 401-506 (HLAE…ALER), 516-627 (QLHL…SLQE), and 637-740 (RLRR…EVET). 2 EF-hand domains span residues 753 to 788 (EQMN…MGYD) and 789 to 824 (LGEA…ETAD). 6 residues coordinate Ca(2+): Asp-766, Asn-770, Asp-777, Asp-802, Asn-804, and Thr-808.

Belongs to the alpha-actinin family. As to quaternary structure, homodimer; antiparallel. Also forms heterodimers with ACTN3. Interacts with ADAM12, MYOZ1, MYOZ2 and MYOZ3. Interacts via its C-terminal region with the LDB3 PDZ domain. Interacts with XIRP2. Interacts with DST (via N-terminus). Interacts with PARVB. Interacts with SYNPO2. Ubiquitinated by FBXL22, leading to proteasomal degradation.

The protein resides in the cytoplasm. It localises to the myofibril. It is found in the sarcomere. Its subcellular location is the z line. Its function is as follows. F-actin cross-linking protein which is thought to anchor actin to a variety of intracellular structures. This is a bundling protein. In Mus musculus (Mouse), this protein is Alpha-actinin-2 (Actn2).